We begin with the raw amino-acid sequence, 192 residues long: Signal peptidase complex catalytic subunit sec11 (192 aa).

The Cytoplasmic segment spans residues 1–18 (MLSFLSSNLSSTRQSLAQ). The chain crosses the membrane as a helical; Signal-anchor for type II membrane protein span at residues 19-39 (VLNFALVLSTAFMLWKGLSVF). Residues 40–192 (TASSSPIVVV…GLMVILQREQ (153 aa)) are Lumenal-facing. Catalysis depends on charge relay system residues serine 53, histidine 92, and aspartate 133. Residues 177-188 (VLLGIMGLMVIL) form a C-terminal short (CTS) helix region.

It belongs to the peptidase S26B family. In terms of assembly, component of the signal peptidase complex (SPC) composed of a catalytic subunit SEC11 and three accessory subunits SPC1, SPC2 and SPC3. The complex induces a local thinning of the ER membrane which is used to measure the length of the signal peptide (SP) h-region of protein substrates. This ensures the selectivity of the complex towards h-regions shorter than 18-20 amino acids. SPC associates with the translocon complex.

The protein resides in the endoplasmic reticulum membrane. It carries out the reaction Cleavage of hydrophobic, N-terminal signal or leader sequences from secreted and periplasmic proteins.. Functionally, catalytic component of the signal peptidase complex (SPC) which catalyzes the cleavage of N-terminal signal sequences from nascent proteins as they are translocated into the lumen of the endoplasmic reticulum. Specifically cleaves N-terminal signal peptides that contain a hydrophobic alpha-helix (h-region) shorter than 18-20 amino acids. In Aspergillus clavatus (strain ATCC 1007 / CBS 513.65 / DSM 816 / NCTC 3887 / NRRL 1 / QM 1276 / 107), this protein is Signal peptidase complex catalytic subunit sec11 (sec11).